We begin with the raw amino-acid sequence, 276 residues long: Glucosamine-6-phosphate deaminase 2 (276 aa).

The active-site Proton acceptor; for enolization step is Asp-72. A coiled-coil region spans residues 103-131 (NAHILDGNAADLQAECDAFEEKIKEAGGI). The active-site For ring-opening step is Asp-141. His-143 serves as the catalytic Proton acceptor; for ring-opening step. Glu-148 functions as the For ring-opening step in the catalytic mechanism. Thr-161 carries the phosphothreonine modification.

The protein belongs to the glucosamine/galactosamine-6-phosphate isomerase family. In terms of assembly, homohexamer.

It is found in the cytoplasm. The enzyme catalyses alpha-D-glucosamine 6-phosphate + H2O = beta-D-fructose 6-phosphate + NH4(+). It participates in nucleotide-sugar biosynthesis; UDP-N-acetyl-alpha-D-glucosamine biosynthesis; alpha-D-glucosamine 6-phosphate from D-fructose 6-phosphate: step 1/1. Allosterically activated by N-acetylglucosamine-6-phosphate (GlcNAc6P). Catalyzes the reversible conversion of alpha-D-glucosamine 6-phosphate (GlcN-6P) into beta-D-fructose 6-phosphate (Fru-6P) and ammonium ion, a regulatory reaction step in de novo uridine diphosphate-N-acetyl-alpha-D-glucosamine (UDP-GlcNAc) biosynthesis via hexosamine pathway. Deamination is coupled to aldo-keto isomerization mediating the metabolic flux from UDP-GlcNAc toward Fru-6P. At high ammonium level can drive amination and isomerization of Fru-6P toward hexosamines and UDP-GlcNAc synthesis. Has a role in fine tuning the metabolic fluctuations of cytosolic UDP-GlcNAc and their effects on hyaluronan synthesis that occur during tissue remodeling. The polypeptide is Glucosamine-6-phosphate deaminase 2 (Mus musculus (Mouse)).